We begin with the raw amino-acid sequence, 307 residues long: Pantothenate kinase (307 aa).

Position 90 to 97 (90 to 97 (GSVAVGKS)) interacts with ATP.

It belongs to the prokaryotic pantothenate kinase family.

The protein resides in the cytoplasm. The catalysed reaction is (R)-pantothenate + ATP = (R)-4'-phosphopantothenate + ADP + H(+). The protein operates within cofactor biosynthesis; coenzyme A biosynthesis; CoA from (R)-pantothenate: step 1/5. The chain is Pantothenate kinase from Limosilactobacillus reuteri subsp. reuteri (strain JCM 1112) (Lactobacillus reuteri).